The primary structure comprises 201 residues: 3-isopropylmalate dehydratase small subunit (201 aa).

Belongs to the LeuD family. LeuD type 1 subfamily. In terms of assembly, heterodimer of LeuC and LeuD.

It carries out the reaction (2R,3S)-3-isopropylmalate = (2S)-2-isopropylmalate. Its pathway is amino-acid biosynthesis; L-leucine biosynthesis; L-leucine from 3-methyl-2-oxobutanoate: step 2/4. Functionally, catalyzes the isomerization between 2-isopropylmalate and 3-isopropylmalate, via the formation of 2-isopropylmaleate. This Shigella boydii serotype 18 (strain CDC 3083-94 / BS512) protein is 3-isopropylmalate dehydratase small subunit.